The following is a 296-amino-acid chain: uncharacterized protein (296 aa).

Positions 1–95 (MYKIVSKKEL…VGPLGVPSEF (95 aa)) constitute an FAD-binding FR-type domain.

This is an uncharacterized protein from Clostridium beijerinckii (Clostridium MP).